Here is a 447-residue protein sequence, read N- to C-terminus: Serine/threonine-protein phosphatase 2A 55 kDa regulatory subunit B delta isoform (447 aa).

WD repeat units lie at residues 26 to 65 (AEADIISTVEFNYSGELLATGDKGGRVVIFQREQESKNRP), 91 to 132 (EIEE…KRAE), 175 to 213 (AHTYHINSISVNSDYETYLSADDLRINLWHLEITDRSFN), 224 to 264 (ELTE…LCDR), 283 to 321 (EIISSISDVKFSHSGRYMMTRDYLSVKVWDLNMENRPVE), 338 to 379 (ENDC…DITL), and 414 to 447 (DFNKKILHTAWHPKENVIAVAATNNLYIFQDKMN).

This sequence belongs to the phosphatase 2A regulatory subunit B family. PP2A consists of a common heterodimeric core enzyme, composed of a 36 kDa catalytic subunit (subunit C) and a 65 kDa constant regulatory subunit (PR65 or subunit A), that associates with a variety of regulatory subunits.

It localises to the cytoplasm. Functionally, substrate-recognition subunit of protein phosphatase 2A (PP2A) that plays a key role in cell cycle by controlling mitosis entry and exit. The activity of PP2A complexes containing PPP2R2D (PR55-delta) fluctuate during the cell cycle: the activity is high in interphase and low in mitosis. This Danio rerio (Zebrafish) protein is Serine/threonine-protein phosphatase 2A 55 kDa regulatory subunit B delta isoform (ppp2r2d).